The following is a 294-amino-acid chain: Protoheme IX farnesyltransferase (294 aa).

Helical transmembrane passes span 22-42 (VTQL…PDLP), 46-66 (IVIA…AINC), 89-109 (ITVP…MWVL), 116-136 (LTMW…TIIL), 143-163 (NIVI…AAVA), 170-190 (AWIL…ALAL), 211-231 (AFTQ…TMLP), 232-252 (FAVG…DVIF), and 272-292 (FTYS…DHYL).

It belongs to the UbiA prenyltransferase family. Protoheme IX farnesyltransferase subfamily.

Its subcellular location is the cell inner membrane. The catalysed reaction is heme b + (2E,6E)-farnesyl diphosphate + H2O = Fe(II)-heme o + diphosphate. It functions in the pathway porphyrin-containing compound metabolism; heme O biosynthesis; heme O from protoheme: step 1/1. Its function is as follows. Converts heme B (protoheme IX) to heme O by substitution of the vinyl group on carbon 2 of heme B porphyrin ring with a hydroxyethyl farnesyl side group. The chain is Protoheme IX farnesyltransferase from Herminiimonas arsenicoxydans.